The chain runs to 367 residues: Trans-enoyl reductase ffsC (367 aa).

Position 55 to 58 (C55 to K58) interacts with NADP(+). A substrate-binding site is contributed by T143–L150. NADP(+) contacts are provided by residues S203–N206, Y221, and L268–E269. Residue G288–L292 coordinates substrate. An NADP(+)-binding site is contributed by V357–S358.

Belongs to the zinc-containing alcohol dehydrogenase family. Monomer.

Its pathway is mycotoxin biosynthesis. Its function is as follows. Trans-enoyl reductase; part of the gene cluster that mediates the biosynthesis of the cytotoxic leucine-containing cytochalasans, including aspochalasin C, aspochalasin E, TMC-169, flavichalasine F, aspergillin PZ, aspochalasin M and flavichalasine G. The first step in the pathway is catalyzed by the hybrid PKS-NRPS ffsA that utilizes 8 units of malonyl-CoA to iteratively assemble the octaketide chain before addition of L-leucine by the C-terminal NRPS modules. Because ffsA lacks a designated enoylreductase (ER) domain, the required activity is provided the enoyl reductase fssC. The methyltransferase (MT) domain of ffsA catalyzes the alpha-methylation at C10 and C14 using S-adenosyl-L-methionine as the methyl-donating cosubstrate. Reduction by the hydrolyase ffsE, followed by dehydration and intra-molecular Diels-Alder cyclization by the Diels-Alderase ffsF then yield the required isoindolone-fused macrocycle. A number of oxidative steps catalyzed by the tailoring cytochrome P450 monooxygenase ffsD, the FAD-linked oxidoreductase ffsJ and the short-chain dehydrogenase/reductase ffsI, are further required to afford the final products. This chain is Trans-enoyl reductase ffsC, found in Aspergillus flavipes.